The sequence spans 319 residues: Aspartate carbamoyltransferase catalytic subunit (319 aa).

Carbamoyl phosphate is bound by residues Arg54 and Thr55. Lys82 is a binding site for L-aspartate. Residues Arg104, His134, and Gln137 each contribute to the carbamoyl phosphate site. The L-aspartate site is built by Arg171 and Arg227. Residues Gly271 and Pro272 each contribute to the carbamoyl phosphate site.

This sequence belongs to the aspartate/ornithine carbamoyltransferase superfamily. ATCase family. Heterododecamer (2C3:3R2) of six catalytic PyrB chains organized as two trimers (C3), and six regulatory PyrI chains organized as three dimers (R2).

It carries out the reaction carbamoyl phosphate + L-aspartate = N-carbamoyl-L-aspartate + phosphate + H(+). Its pathway is pyrimidine metabolism; UMP biosynthesis via de novo pathway; (S)-dihydroorotate from bicarbonate: step 2/3. In terms of biological role, catalyzes the condensation of carbamoyl phosphate and aspartate to form carbamoyl aspartate and inorganic phosphate, the committed step in the de novo pyrimidine nucleotide biosynthesis pathway. This is Aspartate carbamoyltransferase catalytic subunit from Kineococcus radiotolerans (strain ATCC BAA-149 / DSM 14245 / SRS30216).